The sequence spans 424 residues: Glutamate-1-semialdehyde 2,1-aminomutase (424 aa).

Lysine 266 bears the N6-(pyridoxal phosphate)lysine mark.

The protein belongs to the class-III pyridoxal-phosphate-dependent aminotransferase family. HemL subfamily. Homodimer. Pyridoxal 5'-phosphate is required as a cofactor.

The protein resides in the cytoplasm. It catalyses the reaction (S)-4-amino-5-oxopentanoate = 5-aminolevulinate. It functions in the pathway porphyrin-containing compound metabolism; protoporphyrin-IX biosynthesis; 5-aminolevulinate from L-glutamyl-tRNA(Glu): step 2/2. This is Glutamate-1-semialdehyde 2,1-aminomutase from Azoarcus sp. (strain BH72).